We begin with the raw amino-acid sequence, 59 residues long: Conotoxin reg3.15 (59 aa).

Residues 1–15 form the signal peptide; sequence RVLLTICLLLFPLTA. The propeptide occupies 16–44; it reads IPLGGDQPAERMRNVRSAVQDPRFDSVGW. 3 disulfide bridges follow: cysteine 45-cysteine 59, cysteine 46-cysteine 55, and cysteine 51-cysteine 58.

The protein belongs to the conotoxin M superfamily. In terms of tissue distribution, expressed by the venom duct.

Its subcellular location is the secreted. The protein is Conotoxin reg3.15 of Conus regius (Crown cone).